The primary structure comprises 244 residues: DNA repair protein RecO (244 aa).

This sequence belongs to the RecO family.

Involved in DNA repair and RecF pathway recombination. The sequence is that of DNA repair protein RecO from Caldicellulosiruptor bescii (strain ATCC BAA-1888 / DSM 6725 / KCTC 15123 / Z-1320) (Anaerocellum thermophilum).